The following is a 326-amino-acid chain: ELMO domain-containing protein 1 (326 aa).

Residues 133-306 form the ELMO domain; it reads QHEEMLLKLW…KFRKRIIKQL (174 aa).

Acts as a GTPase-activating protein (GAP) toward guanine nucleotide exchange factors like ARL2, ARL3, ARF1 and ARF6, but not for GTPases outside the Arf family. The sequence is that of ELMO domain-containing protein 1 (Elmod1) from Mus musculus (Mouse).